A 209-amino-acid chain; its full sequence is Uracil phosphoribosyltransferase (209 aa).

Residues arginine 79, arginine 104, and 131–139 each bind 5-phospho-alpha-D-ribose 1-diphosphate; that span reads DPMLATGGS. Uracil is bound by residues isoleucine 194 and 199–201; that span reads GDA. 5-phospho-alpha-D-ribose 1-diphosphate is bound at residue aspartate 200.

The protein belongs to the UPRTase family. Requires Mg(2+) as cofactor.

It carries out the reaction UMP + diphosphate = 5-phospho-alpha-D-ribose 1-diphosphate + uracil. It functions in the pathway pyrimidine metabolism; UMP biosynthesis via salvage pathway; UMP from uracil: step 1/1. Its activity is regulated as follows. Allosterically activated by GTP. In terms of biological role, catalyzes the conversion of uracil and 5-phospho-alpha-D-ribose 1-diphosphate (PRPP) to UMP and diphosphate. The sequence is that of Uracil phosphoribosyltransferase from Chromohalobacter salexigens (strain ATCC BAA-138 / DSM 3043 / CIP 106854 / NCIMB 13768 / 1H11).